Reading from the N-terminus, the 281-residue chain is Cytosolic Fe-S cluster assembly factor CFD1 (281 aa).

24 to 31 (GKGGVGKS) contacts ATP. C201 and C204 together coordinate [4Fe-4S] cluster.

The protein belongs to the Mrp/NBP35 ATP-binding proteins family. NUBP2/CFD1 subfamily. In terms of assembly, heterotetramer of 2 NBP35 and 2 CFD1 chains. Requires [4Fe-4S] cluster as cofactor.

It localises to the cytoplasm. In terms of biological role, component of the cytosolic iron-sulfur (Fe/S) protein assembly (CIA) machinery. Required for maturation of extramitochondrial Fe-S proteins. The NBP35-CFD1 heterotetramer forms a Fe-S scaffold complex, mediating the de novo assembly of an Fe-S cluster and its transfer to target apoproteins. Required for biogenesis and export of both ribosomal subunits, which may reflect a role in assembly of the Fe/S clusters in RLI1, a protein which performs rRNA processing and ribosome export. The chain is Cytosolic Fe-S cluster assembly factor CFD1 from Eremothecium gossypii (strain ATCC 10895 / CBS 109.51 / FGSC 9923 / NRRL Y-1056) (Yeast).